Consider the following 223-residue polypeptide: 23 kDa piroplasm membrane protein (223 aa).

The first 19 residues, 1 to 19, serve as a signal peptide directing secretion; the sequence is MHKFTKVFFVAILVHTLKS. Residues 20–197 are Extracellular-facing; it reads GLVFTPVSGT…EEEKSDKKKY (178 aa). A glycan (N-linked (GlcNAc...) asparagine) is linked at N69. A helical membrane pass occupies residues 198-218; the sequence is VLMVVVVVVFVVVASLVVFLV. Residues 219-223 are Cytoplasmic-facing; the sequence is KFCLK.

The protein resides in the membrane. The protein is 23 kDa piroplasm membrane protein of Theileria buffeli.